The sequence spans 415 residues: Gamma-glutamyl phosphate reductase (415 aa).

Belongs to the gamma-glutamyl phosphate reductase family.

It is found in the cytoplasm. The enzyme catalyses L-glutamate 5-semialdehyde + phosphate + NADP(+) = L-glutamyl 5-phosphate + NADPH + H(+). The protein operates within amino-acid biosynthesis; L-proline biosynthesis; L-glutamate 5-semialdehyde from L-glutamate: step 2/2. In terms of biological role, catalyzes the NADPH-dependent reduction of L-glutamate 5-phosphate into L-glutamate 5-semialdehyde and phosphate. The product spontaneously undergoes cyclization to form 1-pyrroline-5-carboxylate. The polypeptide is Gamma-glutamyl phosphate reductase (Bacillus cereus (strain 03BB102)).